The following is a 348-amino-acid chain: Probable mitochondrial adenine nucleotide transporter BTL1 (348 aa).

Solcar repeat units follow at residues 46–129 (SREA…VKRA), 157–241 (SWIS…MKTS), and 251–338 (LSRP…WKDI). 6 consecutive transmembrane segments (helical) span residues 52-72 (FLSG…LETI), 104-124 (GNEI…GTFE), 156-176 (ISWI…STLV), 213-233 (FYAG…CYYF), 256-276 (MLVL…PLEV), and 321-341 (VMPS…ILLA).

The protein belongs to the mitochondrial carrier (TC 2.A.29) family.

It is found in the mitochondrion inner membrane. Its function is as follows. Probable mitochondrial adenylate carrier that catalyzes the transport of ATP, ADP and AMP. The polypeptide is Probable mitochondrial adenine nucleotide transporter BTL1 (Arabidopsis thaliana (Mouse-ear cress)).